The sequence spans 400 residues: Trans-enoyl reductase ucsL (400 aa).

50-53 (TDHK) is a binding site for NADP(+). Residue 145–152 (SVHGSVAL) participates in substrate binding. NADP(+) is bound by residues 204–207 (STAC), 227–230 (SPRN), Tyr245, and 292–293 (LE). 313-317 (GPVMF) is a substrate binding site. 389-390 (VS) contributes to the NADP(+) binding site.

This sequence belongs to the zinc-containing alcohol dehydrogenase family. As to quaternary structure, monomer.

The protein operates within mycotoxin biosynthesis. In terms of biological role, trans-enoyl reductase; part of the gene cluster that mediates the biosynthesis of UCS1025A, a member of the pyrrolizidinone family that acts as a strong telomerase inhibitor and displays potent antibacterial and antitumor properties. These compounds share a hemiaminal-containing pyrrolizidinone core fused with a gamma-lactone, giving a furopyrrolizidine that is connected to a decalin fragment. The polyketide synthase module (PKS) of the PKS-NRPS ucsA is responsible for the synthesis of the polyketide backbone via the condensation of an acetyl-CoA starter unit with 6 malonyl-CoA units. The downstream nonribosomal peptide synthetase (NRPS) module then amidates the carboxyl end of the polyketide with a 2S,3S-methylproline derived from L-isoleucine by the 2-oxoglutarate-dependent dioxygenase ucsF which converts L-isoleucine to (4S,5S)-4-methylpyrroline-5-carboxylate that is further converted to 2S,3S-methylproline by the pyrroline-5-carboxylate reductase ucsG. Reductive release of the completed aminoacyl polyketide from the assembly line can form the 3-pyrrolin-2-one structure via an intramolecular Knoevenagel reaction. Because ucsA lacks a designated enoylreductase (ER) domain, the required activity is provided the enoyl reductase ucsL. This keto acyclic precursor is the substrate of the Diels-Alderase ucsH, that catalyzes the Diels-Alder cycloaddition. Oxidation of the 3S-methyl group to a carboxylate by the cytochrome P450 monooxygenase ucsK allows an oxa-Michael cyclization that might involve the reductase/dehydrogenase ucsI and which furnishes the furopyrrolizidine. The oxidase ucsJ likely plays a critical role in stereoselective reduction of the C5-C6 double bond to afford the required R-configured carboxylate group. Further enolization and oxidation at C5 by an unidentified enzyme affords the last intermediate that can undergo oxa-Michael cyclization to yield UCS1025A. This Acremonium sp protein is Trans-enoyl reductase ucsL.